The sequence spans 241 residues: ATP synthase subunit a (241 aa).

Transmembrane regions (helical) follow at residues 30 to 50 (GQVF…VLVG), 89 to 109 (LPFI…GALI), 128 to 148 (INTT…AGLS), 193 to 213 (LAVG…VMLL), and 214 to 234 (GLFT…FYIG).

The protein belongs to the ATPase A chain family. In terms of assembly, F-type ATPases have 2 components, CF(1) - the catalytic core - and CF(0) - the membrane proton channel. CF(1) has five subunits: alpha(3), beta(3), gamma(1), delta(1), epsilon(1). CF(0) has four main subunits: a, b, b' and c.

The protein resides in the cellular thylakoid membrane. Key component of the proton channel; it plays a direct role in the translocation of protons across the membrane. This chain is ATP synthase subunit a, found in Synechococcus sp. (strain CC9902).